The following is a 150-amino-acid chain: Large ribosomal subunit protein uL11 (150 aa).

This sequence belongs to the universal ribosomal protein uL11 family. Part of the ribosomal stalk of the 50S ribosomal subunit. Interacts with L10 and the large rRNA to form the base of the stalk. L10 forms an elongated spine to which L12 dimers bind in a sequential fashion forming a multimeric L10(L12)X complex. In terms of processing, one or more lysine residues are methylated.

Its function is as follows. Forms part of the ribosomal stalk which helps the ribosome interact with GTP-bound translation factors. The sequence is that of Large ribosomal subunit protein uL11 from Ureaplasma parvum serovar 3 (strain ATCC 27815 / 27 / NCTC 11736).